Reading from the N-terminus, the 354-residue chain is Uroporphyrinogen decarboxylase (354 aa).

Substrate contacts are provided by residues 35–39, Asp-84, Tyr-159, Ser-214, and His-333; that span reads RQAGR.

It belongs to the uroporphyrinogen decarboxylase family. As to quaternary structure, homodimer.

The protein localises to the cytoplasm. The enzyme catalyses uroporphyrinogen III + 4 H(+) = coproporphyrinogen III + 4 CO2. It participates in porphyrin-containing compound metabolism; protoporphyrin-IX biosynthesis; coproporphyrinogen-III from 5-aminolevulinate: step 4/4. Functionally, catalyzes the decarboxylation of four acetate groups of uroporphyrinogen-III to yield coproporphyrinogen-III. This Nocardia farcinica (strain IFM 10152) protein is Uroporphyrinogen decarboxylase.